The chain runs to 353 residues: Protein MGF 360-9L (353 aa).

Belongs to the asfivirus MGF 360 family. As to quaternary structure, interacts with host STAT1; this interaction mediates STAT1 degradation through apoptosis. Interacts with host STAT2; this interaction mediates STAT2 degradation through the proteasome.

Its subcellular location is the host cytoplasm. Its function is as follows. Plays a role in virus cell tropism, and may be required for efficient virus replication in macrophages. In addition, inhibits IFN-beta-induced IFN-stimulated genes (ISGs) transcription. Mechanistically, degrades host STAT1 and STAT2 through apoptosis and ubiquitin-proteasome pathways respectively. This chain is Protein MGF 360-9L, found in African swine fever virus (isolate Tick/Malawi/Lil 20-1/1983) (ASFV).